Reading from the N-terminus, the 580-residue chain is Putative adenine deaminase YerA (580 aa).

Ser399 is modified (phosphoserine).

The protein belongs to the metallo-dependent hydrolases superfamily. Adenine deaminase family.

The catalysed reaction is adenine + H2O + H(+) = hypoxanthine + NH4(+). The chain is Putative adenine deaminase YerA (yerA) from Bacillus subtilis (strain 168).